Reading from the N-terminus, the 278-residue chain is HTH-type transcriptional activator RhaS (278 aa).

The HTH araC/xylS-type domain maps to 174–272 (NQLMAWLEDH…NWSPRDIRQG (99 aa)). DNA-binding regions (H-T-H motif) lie at residues 191–212 (EAVA…KQHT) and 239–262 (VTEI…RREF).

In terms of assembly, binds DNA as a dimer.

The protein localises to the cytoplasm. Functionally, activates expression of the rhaBAD and rhaT operons. This Salmonella paratyphi A (strain ATCC 9150 / SARB42) protein is HTH-type transcriptional activator RhaS.